The sequence spans 404 residues: Glucose-1-phosphate adenylyltransferase (404 aa).

Alpha-D-glucose 1-phosphate contacts are provided by residues Tyr99, Gly164, 179-180 (EK), and Ser197.

Belongs to the bacterial/plant glucose-1-phosphate adenylyltransferase family. In terms of assembly, homotetramer.

The enzyme catalyses alpha-D-glucose 1-phosphate + ATP + H(+) = ADP-alpha-D-glucose + diphosphate. It participates in glycan biosynthesis; glycogen biosynthesis. In terms of biological role, involved in the biosynthesis of ADP-glucose, a building block required for the elongation reactions to produce glycogen. Catalyzes the reaction between ATP and alpha-D-glucose 1-phosphate (G1P) to produce pyrophosphate and ADP-Glc. This is Glucose-1-phosphate adenylyltransferase from Rhodococcus opacus (strain B4).